Consider the following 476-residue polypeptide: Cytoplasmic 60S subunit biogenesis factor ZNF622 (476 aa).

Position 2 is an N-acetylalanine (A2). 2 consecutive U1-type zinc fingers follow at residues 4-28 (LTCI…TDWH) and 69-93 (TYCT…SRRH). The disordered stretch occupies residues 137–243 (AIKAQPSTSP…AEDAAAEESP (107 aa)). Residues 167-177 (VPERDPTEKPP) show a composition bias toward basic and acidic residues. A compositionally biased stretch (acidic residues) spans 195–239 (EDGEEEGEEEEEDDEDEDWEDIDSDDGLECEDPGVEDQDAEDAAA). Position 275 is a phosphoserine (S275).

Belongs to the REI1 family. In terms of assembly, homo- and heterodimer. Associates with pre-60S ribosomal particles. Interacts with MELK and MYBL2. Interacts with DNAJC21. Post-translationally, phosphorylated by MELK. The phosphorylation may redirect the protein to the nucleus. Ubiquitinated by HECTD1, leading to its degradation.

It is found in the cytoplasm. The protein resides in the nucleus. Pre-60S-associated cytoplasmic factor involved in the cytoplasmic maturation of the 60S subunit. This Mus musculus (Mouse) protein is Cytoplasmic 60S subunit biogenesis factor ZNF622 (Znf622).